The following is a 314-amino-acid chain: Ornithine carbamoyltransferase (314 aa).

Residues 58–61 (STRT), Gln-85, Arg-109, and 136–139 (HPLQ) each bind carbamoyl phosphate. L-ornithine contacts are provided by residues Asn-168, Asp-232, and 236–237 (SM). Carbamoyl phosphate is bound by residues 272-273 (CL) and Arg-300.

Belongs to the aspartate/ornithine carbamoyltransferase superfamily. OTCase family.

It is found in the cytoplasm. It carries out the reaction carbamoyl phosphate + L-ornithine = L-citrulline + phosphate + H(+). The protein operates within amino-acid biosynthesis; L-arginine biosynthesis; L-arginine from L-ornithine and carbamoyl phosphate: step 1/3. Reversibly catalyzes the transfer of the carbamoyl group from carbamoyl phosphate (CP) to the N(epsilon) atom of ornithine (ORN) to produce L-citrulline. In Hyperthermus butylicus (strain DSM 5456 / JCM 9403 / PLM1-5), this protein is Ornithine carbamoyltransferase.